The sequence spans 449 residues: Signal recognition particle protein (449 aa).

GTP contacts are provided by residues 109 to 116 (GLQGSGKT), 191 to 195 (DTAGR), and 249 to 252 (SRID).

It belongs to the GTP-binding SRP family. SRP54 subfamily. In terms of assembly, part of the signal recognition particle protein translocation system, which is composed of SRP and FtsY. SRP is a ribonucleoprotein composed of Ffh and a 4.5S RNA molecule.

It localises to the cytoplasm. The catalysed reaction is GTP + H2O = GDP + phosphate + H(+). In terms of biological role, involved in targeting and insertion of nascent membrane proteins into the cytoplasmic membrane. Binds to the hydrophobic signal sequence of the ribosome-nascent chain (RNC) as it emerges from the ribosomes. The SRP-RNC complex is then targeted to the cytoplasmic membrane where it interacts with the SRP receptor FtsY. Interaction with FtsY leads to the transfer of the RNC complex to the Sec translocase for insertion into the membrane, the hydrolysis of GTP by both Ffh and FtsY, and the dissociation of the SRP-FtsY complex into the individual components. The sequence is that of Signal recognition particle protein from Rickettsia bellii (strain RML369-C).